The chain runs to 200 residues: Ribonuclease HII (200 aa).

Positions 6–200 constitute an RNase H type-2 domain; it reads ESIAGVDEVG…KLFAVHGSLT (195 aa). Residues Asp12, Glu13, and Asp108 each coordinate a divalent metal cation.

It belongs to the RNase HII family. Requires Mn(2+) as cofactor. The cofactor is Mg(2+).

It localises to the cytoplasm. The catalysed reaction is Endonucleolytic cleavage to 5'-phosphomonoester.. Endonuclease that specifically degrades the RNA of RNA-DNA hybrids. This chain is Ribonuclease HII, found in Prochlorococcus marinus (strain MIT 9303).